The chain runs to 205 residues: Glycerol-3-phosphate acyltransferase (205 aa).

Topologically, residues 1–3 (MSA) are periplasmic. A helical transmembrane segment spans residues 4–24 (IAPGMILIAYLCGSISSAILV). Over 25-52 (CRLCGLPDPRTSGSGNPGATNVLRIGGK) the chain is Cytoplasmic. A helical membrane pass occupies residues 53–73 (GAAVAVLIFDVLKGMLPVWGA). Over 74–80 (YELGVSP) the chain is Periplasmic. Residues 81–101 (FWLGLIAIAACLGHIWPVFFG) traverse the membrane as a helical segment. At 102–111 (FKGGKGVATA) the chain is on the cytoplasmic side. A helical transmembrane segment spans residues 112–132 (FGAIAPIGWDLTGVMAGTWLL). Topologically, residues 133-137 (TVLLS) are periplasmic. A helical membrane pass occupies residues 138-158 (GYSSLGAIVSALIAPFYVWWF). At 159–205 (KPQFTFPVSMLSCLILLRHHDNIQRLWRRQETKIWTKFKRKREKDPE) the chain is on the cytoplasmic side.

The protein belongs to the PlsY family. Probably interacts with PlsX.

It is found in the cell inner membrane. The enzyme catalyses sn-glycerol 3-phosphate + an acyl-CoA = a 1-acyl-sn-glycero-3-phosphate + CoA. It carries out the reaction a fatty acyl-[ACP] + sn-glycerol 3-phosphate = a 1-acyl-sn-glycero-3-phosphate + holo-[ACP]. Its pathway is lipid metabolism; phospholipid metabolism. Catalyzes the transfer of an acyl group from acyl-ACP to glycerol-3-phosphate (G3P) to form lysophosphatidic acid (LPA). This enzyme can also utilize acyl-CoA as fatty acyl donor, but not acyl-PO(4). This Escherichia coli O8 (strain IAI1) protein is Glycerol-3-phosphate acyltransferase.